Consider the following 275-residue polypeptide: MTKDRIDRRFAALKAENRAGFVTYIMAGDPDAATTLSVLKGLPAAGADLIELGFPFSDPMAEGPTIQRAAQRGLKSGMTLQGTLDLVAGFREGDADTPIILMGYLNPVLNRGFESFAAAAAKAGVDGLIIVDCPPEEAGPLTDALEAEGIALIRLAAPTTDDKRLPMVVRRTSGFVYYVSVAGVTGVKSADAADVAPAVARLRKASGLPVAVGFGIRTPAQAAAVARVADAAVVGSALVDEIEAAAQLNENVTEKVLLKASELAKAVRSARLELA.

Catalysis depends on proton acceptor residues Glu-51 and Glu-62.

This sequence belongs to the TrpA family. As to quaternary structure, tetramer of two alpha and two beta chains.

It catalyses the reaction (1S,2R)-1-C-(indol-3-yl)glycerol 3-phosphate + L-serine = D-glyceraldehyde 3-phosphate + L-tryptophan + H2O. The protein operates within amino-acid biosynthesis; L-tryptophan biosynthesis; L-tryptophan from chorismate: step 5/5. Functionally, the alpha subunit is responsible for the aldol cleavage of indoleglycerol phosphate to indole and glyceraldehyde 3-phosphate. The chain is Tryptophan synthase alpha chain from Caulobacter sp. (strain K31).